We begin with the raw amino-acid sequence, 128 residues long: Leucine-rich single-pass membrane protein 1 (128 aa).

At Ser-24 the chain carries Phosphoserine. A helical transmembrane segment spans residues Gly-66 to Ile-86. Residues Asn-90 to Lys-111 are a coiled coil.

The protein localises to the membrane. This chain is Leucine-rich single-pass membrane protein 1 (Lsmem1), found in Mus musculus (Mouse).